Consider the following 80-residue polypeptide: D-alanyl carrier protein 2 (80 aa).

The Carrier domain maps to 1–80; sequence MIMDDVKATV…KIVAKVASLQ (80 aa). An O-(pantetheine 4'-phosphoryl)serine modification is found at Ser-38.

The protein belongs to the DltC family. 4'-phosphopantetheine is transferred from CoA to a specific serine of apo-DCP.

The protein resides in the cytoplasm. Its pathway is cell wall biogenesis; lipoteichoic acid biosynthesis. Functionally, carrier protein involved in the D-alanylation of lipoteichoic acid (LTA). The loading of thioester-linked D-alanine onto DltC is catalyzed by D-alanine--D-alanyl carrier protein ligase DltA. The DltC-carried D-alanyl group is further transferred to cell membrane phosphatidylglycerol (PG) by forming an ester bond, probably catalyzed by DltD. D-alanylation of LTA plays an important role in modulating the properties of the cell wall in Gram-positive bacteria, influencing the net charge of the cell wall. The chain is D-alanyl carrier protein 2 from Lactiplantibacillus plantarum (strain ATCC BAA-793 / NCIMB 8826 / WCFS1) (Lactobacillus plantarum).